The chain runs to 117 residues: DNA-binding protein MK1619 (117 aa).

This sequence belongs to the PDCD5 family.

The sequence is that of DNA-binding protein MK1619 from Methanopyrus kandleri (strain AV19 / DSM 6324 / JCM 9639 / NBRC 100938).